The primary structure comprises 189 residues: GMP synthase [glutamine-hydrolyzing] subunit A (189 aa).

The 185-residue stretch at 5 to 189 (KILVVNNYGQ…TNFFEVCDRY (185 aa)) folds into the Glutamine amidotransferase type-1 domain. Cysteine 79 serves as the catalytic Nucleophile. Active-site residues include histidine 166 and glutamate 168.

As to quaternary structure, heterodimer composed of a glutamine amidotransferase subunit (A) and a GMP-binding subunit (B).

It carries out the reaction XMP + L-glutamine + ATP + H2O = GMP + L-glutamate + AMP + diphosphate + 2 H(+). The protein operates within purine metabolism; GMP biosynthesis; GMP from XMP (L-Gln route): step 1/1. Its function is as follows. Catalyzes the synthesis of GMP from XMP. The polypeptide is GMP synthase [glutamine-hydrolyzing] subunit A (Methanosarcina acetivorans (strain ATCC 35395 / DSM 2834 / JCM 12185 / C2A)).